Consider the following 101-residue polypeptide: Small ribosomal subunit protein uS14 (101 aa).

The protein belongs to the universal ribosomal protein uS14 family. As to quaternary structure, part of the 30S ribosomal subunit. Contacts proteins S3 and S10.

In terms of biological role, binds 16S rRNA, required for the assembly of 30S particles and may also be responsible for determining the conformation of the 16S rRNA at the A site. The sequence is that of Small ribosomal subunit protein uS14 from Bartonella henselae (strain ATCC 49882 / DSM 28221 / CCUG 30454 / Houston 1) (Rochalimaea henselae).